The following is a 270-amino-acid chain: Putative phosphoenolpyruvate synthase regulatory protein (270 aa).

150-157 (GVSRCGKT) is an ADP binding site.

The protein belongs to the pyruvate, phosphate/water dikinase regulatory protein family. PSRP subfamily.

The enzyme catalyses [pyruvate, water dikinase] + ADP = [pyruvate, water dikinase]-phosphate + AMP + H(+). It carries out the reaction [pyruvate, water dikinase]-phosphate + phosphate + H(+) = [pyruvate, water dikinase] + diphosphate. In terms of biological role, bifunctional serine/threonine kinase and phosphorylase involved in the regulation of the phosphoenolpyruvate synthase (PEPS) by catalyzing its phosphorylation/dephosphorylation. The polypeptide is Putative phosphoenolpyruvate synthase regulatory protein (Shewanella halifaxensis (strain HAW-EB4)).